A 447-amino-acid polypeptide reads, in one-letter code: Tubulin beta-1 chain (447 aa).

The GTP site is built by glutamine 11, glutamate 69, serine 138, glycine 142, threonine 143, glycine 144, asparagine 204, and asparagine 226. Glutamate 69 lines the Mg(2+) pocket. A disordered region spans residues 428–447; it reads ATADEDAEFDEEQEQEIEDN. Residues 429–447 show a composition bias toward acidic residues; sequence TADEDAEFDEEQEQEIEDN.

This sequence belongs to the tubulin family. In terms of assembly, dimer of alpha and beta chains. A typical microtubule is a hollow water-filled tube with an outer diameter of 25 nm and an inner diameter of 15 nM. Alpha-beta heterodimers associate head-to-tail to form protofilaments running lengthwise along the microtubule wall with the beta-tubulin subunit facing the microtubule plus end conferring a structural polarity. Microtubules usually have 13 protofilaments but different protofilament numbers can be found in some organisms and specialized cells. Mg(2+) is required as a cofactor.

The protein localises to the cytoplasm. Its subcellular location is the cytoskeleton. Tubulin is the major constituent of microtubules, a cylinder consisting of laterally associated linear protofilaments composed of alpha- and beta-tubulin heterodimers. Microtubules grow by the addition of GTP-tubulin dimers to the microtubule end, where a stabilizing cap forms. Below the cap, tubulin dimers are in GDP-bound state, owing to GTPase activity of alpha-tubulin. This is Tubulin beta-1 chain from Manduca sexta (Tobacco hawkmoth).